Here is a 51-residue protein sequence, read N- to C-terminus: Ovomucoid (51 aa).

Positions 3-51 (VDCSGYPKPACTLEYFPLCGSDNQTYANKCAFCNAVVEKNVTLRHLGKC) constitute a Kazal-like domain. Cystine bridges form between C5–C35, C13–C32, and C21–C51. The N-linked (GlcNAc...) asparagine glycan is linked to N42.

It is found in the secreted. In Nothoprocta cinerascens (Brushland tinamou), this protein is Ovomucoid.